Reading from the N-terminus, the 397-residue chain is Acetate kinase (397 aa).

Mg(2+) is bound at residue Asn7. Lys14 serves as a coordination point for ATP. A substrate-binding site is contributed by Arg91. Catalysis depends on Asp148, which acts as the Proton donor/acceptor. ATP is bound by residues 208 to 212 (HLGNG), 283 to 285 (DFR), and 331 to 335 (GIGEN). Glu384 provides a ligand contact to Mg(2+).

The protein belongs to the acetokinase family. Homodimer. The cofactor is Mg(2+). Mn(2+) serves as cofactor.

The protein resides in the cytoplasm. It carries out the reaction acetate + ATP = acetyl phosphate + ADP. Its pathway is metabolic intermediate biosynthesis; acetyl-CoA biosynthesis; acetyl-CoA from acetate: step 1/2. Catalyzes the formation of acetyl phosphate from acetate and ATP. Can also catalyze the reverse reaction. This chain is Acetate kinase, found in Treponema denticola (strain ATCC 35405 / DSM 14222 / CIP 103919 / JCM 8153 / KCTC 15104).